The following is a 175-amino-acid chain: UPF0398 protein SUB1405 (175 aa).

It belongs to the UPF0398 family.

This chain is UPF0398 protein SUB1405, found in Streptococcus uberis (strain ATCC BAA-854 / 0140J).